We begin with the raw amino-acid sequence, 348 residues long: Ferredoxin--NADP reductase (348 aa).

Residues threonine 26, glutamate 45, glutamine 53, tyrosine 58, alanine 98, phenylalanine 133, aspartate 299, and serine 340 each coordinate FAD.

This sequence belongs to the ferredoxin--NADP reductase type 2 family. Homodimer. It depends on FAD as a cofactor.

The catalysed reaction is 2 reduced [2Fe-2S]-[ferredoxin] + NADP(+) + H(+) = 2 oxidized [2Fe-2S]-[ferredoxin] + NADPH. This Prosthecochloris aestuarii (strain DSM 271 / SK 413) protein is Ferredoxin--NADP reductase.